The primary structure comprises 505 residues: Probable cytosol aminopeptidase (505 aa).

2 residues coordinate Mn(2+): K268 and D273. The active site involves K280. D291, D350, and E352 together coordinate Mn(2+). R354 is an active-site residue.

This sequence belongs to the peptidase M17 family. It depends on Mn(2+) as a cofactor.

The protein localises to the cytoplasm. The catalysed reaction is Release of an N-terminal amino acid, Xaa-|-Yaa-, in which Xaa is preferably Leu, but may be other amino acids including Pro although not Arg or Lys, and Yaa may be Pro. Amino acid amides and methyl esters are also readily hydrolyzed, but rates on arylamides are exceedingly low.. The enzyme catalyses Release of an N-terminal amino acid, preferentially leucine, but not glutamic or aspartic acids.. Its function is as follows. Presumably involved in the processing and regular turnover of intracellular proteins. Catalyzes the removal of unsubstituted N-terminal amino acids from various peptides. The polypeptide is Probable cytosol aminopeptidase (Syntrophobacter fumaroxidans (strain DSM 10017 / MPOB)).